A 501-amino-acid chain; its full sequence is MSALRRKFGDDYQVVTTSSSGSGLQPQGPGQGPQQQLVPKKKRQRFVDKNGRCNVQHGNLGSETSRYLSDLFTTLVDLKWRWNLFIFILTYTVAWLFMASMWWVIAYTRGDLNKAHVGNYTPCVANVYNFPSAFLFFIETEATIGYGYRYITDKCPEGIILFLFQSILGSIVDAFLIGCMFIKMSQPKKRAETLMFSEHAVISMRDGKLTLMFRVGNLRNSHMVSAQIRCKLLKSRQTPEGEFLPLDQLELDVGFSTGADQLFLVSPLTICHVIDAKSPFYDLSQRSMQSEQFEIVVILEGIVETTGMTCQARTSYTEDEVLWGHRFFPVISLEEGFFKVDYSQFHATFEVPTPPYSVKEQEEMLLMSSPLIAPAITNSKERHNSVECLDGLDDISTKLPSKLQKITGREDFPKKLLRMSSTTSEKAYSLGDLPMKLQRISSVPGNSEEKLVSKTTKMLSDPMSQSVADLPPKLQKMAGGATRMEGNLPAKLRKMNSDRFT.

The interval 1–40 is disordered; sequence MSALRRKFGDDYQVVTTSSSGSGLQPQGPGQGPQQQLVPK. Topologically, residues 1–80 are cytoplasmic; it reads MSALRRKFGD…LFTTLVDLKW (80 aa). The segment covering 18 to 37 has biased composition (low complexity); it reads SSSGSGLQPQGPGQGPQQQL. Residues 81–105 traverse the membrane as a helical segment; it reads RWNLFIFILTYTVAWLFMASMWWVI. Residues 106–129 are Extracellular-facing; the sequence is AYTRGDLNKAHVGNYTPCVANVYN. A glycan (N-linked (GlcNAc...) asparagine) is linked at Asn119. An intramembrane region (helical; Pore-forming) is located at residues 130-141; sequence FPSAFLFFIETE. The pore-forming intramembrane region spans 142-148; that stretch reads ATIGYGY. Positions 143-148 match the Selectivity filter motif; sequence TIGYGY. The Extracellular portion of the chain corresponds to 149-157; sequence RYITDKCPE. A helical membrane pass occupies residues 158–179; the sequence is GIILFLFQSILGSIVDAFLIGC. At 180–501 the chain is on the cytoplasmic side; it reads MFIKMSQPKK…LRKMNSDRFT (322 aa). The polyphosphoinositide (PIP2)-binding stretch occupies residues 182–209; sequence IKMSQPKKRAETLMFSEHAVISMRDGKL. Phosphoserine occurs at positions 385 and 424.

This sequence belongs to the inward rectifier-type potassium channel (TC 1.A.2.1) family. KCNJ3 subfamily. As to quaternary structure, associates with KCNJ5/GIRK4 or KCNJ6/GIRK2 or KCNJ9/GIRK3 to form a G-protein activated heteromultimer pore-forming unit. The resulting inward current is much larger.

The protein localises to the membrane. The catalysed reaction is K(+)(in) = K(+)(out). Its activity is regulated as follows. Heteromultimer composed of KCNJ3/GIRK1 and KCNJ5/GIRK4 is activated by phosphatidylinositol 4,5 biphosphate (PtdIns(4,5)P2). Its function is as follows. Inward rectifier potassium channels are characterized by a greater tendency to allow potassium to flow into the cell rather than out of it. Their voltage dependence is regulated by the concentration of extracellular potassium; as external potassium is raised, the voltage range of the channel opening shifts to more positive voltages. The inward rectification is mainly due to the blockage of outward current by internal magnesium. This potassium channel is controlled by G proteins. This receptor plays a crucial role in regulating the heartbeat. The polypeptide is G protein-activated inward rectifier potassium channel 1 (KCNJ3) (Bos taurus (Bovine)).